A 262-amino-acid polypeptide reads, in one-letter code: Expansin-A13 (262 aa).

A signal peptide spans 1–22; sequence MAGVARMLAAVVCAIMPAAAMA. One can recognise an Expansin-like EG45 domain in the interval 52–167; that stretch reads GGACGYGNLY…QRVPCMKKGG (116 aa). Residues 177 to 257 form the Expansin-like CBD domain; it reads YFQLVLLTNV…GWRFGQTFAS (81 aa).

The protein belongs to the expansin family. Expansin A subfamily. In terms of tissue distribution, expressed in roots and flowers.

It localises to the secreted. The protein resides in the cell wall. Its subcellular location is the membrane. In terms of biological role, may cause loosening and extension of plant cell walls by disrupting non-covalent bonding between cellulose microfibrils and matrix glucans. No enzymatic activity has been found. May be required for rapid internodal elongation in deepwater rice during submergence. The protein is Expansin-A13 (EXPA13) of Oryza sativa subsp. japonica (Rice).